The following is an 860-amino-acid chain: Probable leucine--tRNA ligase, cytoplasmic (860 aa).

A 'HIGH' region motif is present at residues 41 to 51; it reads PYMNGKLHLGH. The 'KMSKS' region motif lies at 552–556; that stretch reads KMSKS. K555 is a binding site for ATP.

This sequence belongs to the class-I aminoacyl-tRNA synthetase family.

The protein resides in the cytoplasm. It carries out the reaction tRNA(Leu) + L-leucine + ATP = L-leucyl-tRNA(Leu) + AMP + diphosphate. This Enterocytozoon bieneusi (strain H348) (Microsporidian parasite) protein is Probable leucine--tRNA ligase, cytoplasmic.